The sequence spans 883 residues: Histidine--tRNA ligase, cytoplasmic (883 aa).

Belongs to the class-II aminoacyl-tRNA synthetase family.

Its subcellular location is the cytoplasm. The protein resides in the cytosol. The enzyme catalyses tRNA(His) + L-histidine + ATP = L-histidyl-tRNA(His) + AMP + diphosphate + H(+). The protein is Histidine--tRNA ligase, cytoplasmic of Arabidopsis thaliana (Mouse-ear cress).